The following is a 353-amino-acid chain: MTAILERRESESLWGRFCNWITSTENRLYIGWFGVLMIPTLLTATSVFIIAFIAAPPVDIDGIREPVSGSLLYGNNIISGAIIPTSAAIGLHFYPIWEAASVDEWLYNGGPYELIVLHFLLGVACYMGREWELSFRLGMRPWIAVAYSAPVAAAAAVFLIYPIGQGSFSDGMPLGISGTFNFMIVFQAEHNILMHPFHMLGVAGVFGGSLFSAMHGSLVTSSLIRETTENESANAGYRFGQEEETYNIVAAHGYFGRLIFQYASFNNSRSLHFFLAAWPVVGIWFTALGISTMAFNLNGFNFNQSVVDSQGRVINTWADIINRANLGMEVMHERNAHNFPLDLAAVEAPSTNG.

T2 bears the N-acetylthreonine mark. Phosphothreonine is present on T2. Transmembrane regions (helical) follow at residues 29 to 46 (YIGW…TATS), 118 to 133 (HFLL…EWEL), and 142 to 156 (WIAV…AAAA). H118 contacts chlorophyll a. Y126 serves as a coordination point for pheophytin a. [CaMn4O5] cluster is bound by residues D170 and E189. Residues 197–218 (FHMLGVAGVFGGSLFSAMHGSL) form a helical membrane-spanning segment. H198 is a chlorophyll a binding site. A quinone-binding positions include H215 and 264–265 (SF). Residue H215 participates in Fe cation binding. H272 is a binding site for Fe cation. A helical transmembrane segment spans residues 274–288 (FLAAWPVVGIWFTAL). Residues H332, E333, D342, and A344 each coordinate [CaMn4O5] cluster. Residues 345–353 (AVEAPSTNG) constitute a propeptide that is removed on maturation.

It belongs to the reaction center PufL/M/PsbA/D family. PSII is composed of 1 copy each of membrane proteins PsbA, PsbB, PsbC, PsbD, PsbE, PsbF, PsbH, PsbI, PsbJ, PsbK, PsbL, PsbM, PsbT, PsbX, PsbY, PsbZ, Psb30/Ycf12, at least 3 peripheral proteins of the oxygen-evolving complex and a large number of cofactors. It forms dimeric complexes. It depends on The D1/D2 heterodimer binds P680, chlorophylls that are the primary electron donor of PSII, and subsequent electron acceptors. It shares a non-heme iron and each subunit binds pheophytin, quinone, additional chlorophylls, carotenoids and lipids. D1 provides most of the ligands for the Mn4-Ca-O5 cluster of the oxygen-evolving complex (OEC). There is also a Cl(-1) ion associated with D1 and D2, which is required for oxygen evolution. The PSII complex binds additional chlorophylls, carotenoids and specific lipids. as a cofactor. In terms of processing, tyr-161 forms a radical intermediate that is referred to as redox-active TyrZ, YZ or Y-Z. C-terminally processed by CTPA; processing is essential to allow assembly of the oxygen-evolving complex and thus photosynthetic growth.

It localises to the plastid. Its subcellular location is the chloroplast thylakoid membrane. The enzyme catalyses 2 a plastoquinone + 4 hnu + 2 H2O = 2 a plastoquinol + O2. In terms of biological role, photosystem II (PSII) is a light-driven water:plastoquinone oxidoreductase that uses light energy to abstract electrons from H(2)O, generating O(2) and a proton gradient subsequently used for ATP formation. It consists of a core antenna complex that captures photons, and an electron transfer chain that converts photonic excitation into a charge separation. The D1/D2 (PsbA/PsbD) reaction center heterodimer binds P680, the primary electron donor of PSII as well as several subsequent electron acceptors. The polypeptide is Photosystem II protein D1 (Nandina domestica (Heavenly bamboo)).